The sequence spans 210 residues: MTKYKIDFSKGLVPAILQDNQTKQVLMLGYMNQEAFDKTIEDGVVCFYSRSKQRLWTKGETSGHTQLVKDIHVDCDNDTILIDVIPNGPTCHTGSQSCFNTEVPFSVQTLAQTVQDSAQSNNEKSYTKYLLTEGIEKITKKYGEEAFEVVIEAIKGDKKAFVSEVADELYHLFVLMHALGVDFSEIEAELARRHHKRNNFKGERQNIEQW.

The segment at 1–106 (MTKYKIDFSK…SCFNTEVPFS (106 aa)) is phosphoribosyl-AMP cyclohydrolase. Residues 107–210 (VQTLAQTVQD…KGERQNIEQW (104 aa)) are phosphoribosyl-ATP pyrophosphohydrolase.

It in the N-terminal section; belongs to the PRA-CH family. This sequence in the C-terminal section; belongs to the PRA-PH family.

It localises to the cytoplasm. The enzyme catalyses 1-(5-phospho-beta-D-ribosyl)-ATP + H2O = 1-(5-phospho-beta-D-ribosyl)-5'-AMP + diphosphate + H(+). The catalysed reaction is 1-(5-phospho-beta-D-ribosyl)-5'-AMP + H2O = 1-(5-phospho-beta-D-ribosyl)-5-[(5-phospho-beta-D-ribosylamino)methylideneamino]imidazole-4-carboxamide. The protein operates within amino-acid biosynthesis; L-histidine biosynthesis; L-histidine from 5-phospho-alpha-D-ribose 1-diphosphate: step 2/9. It participates in amino-acid biosynthesis; L-histidine biosynthesis; L-histidine from 5-phospho-alpha-D-ribose 1-diphosphate: step 3/9. The sequence is that of Histidine biosynthesis bifunctional protein HisIE (hisI) from Staphylococcus aureus (strain Mu50 / ATCC 700699).